The chain runs to 369 residues: Anhydro-N-acetylmuramic acid kinase (369 aa).

12–19 (GTSMDGVD) is an ATP binding site.

The protein belongs to the anhydro-N-acetylmuramic acid kinase family.

The catalysed reaction is 1,6-anhydro-N-acetyl-beta-muramate + ATP + H2O = N-acetyl-D-muramate 6-phosphate + ADP + H(+). It participates in amino-sugar metabolism; 1,6-anhydro-N-acetylmuramate degradation. The protein operates within cell wall biogenesis; peptidoglycan recycling. Functionally, catalyzes the specific phosphorylation of 1,6-anhydro-N-acetylmuramic acid (anhMurNAc) with the simultaneous cleavage of the 1,6-anhydro ring, generating MurNAc-6-P. Is required for the utilization of anhMurNAc either imported from the medium or derived from its own cell wall murein, and thus plays a role in cell wall recycling. In Shewanella loihica (strain ATCC BAA-1088 / PV-4), this protein is Anhydro-N-acetylmuramic acid kinase.